We begin with the raw amino-acid sequence, 528 residues long: Importin subunit alpha-2 (528 aa).

The span at 1–15 (MADDSASPSPSSASP) shows a compositional bias: low complexity. Positions 1–36 (MADDSASPSPSSASPLQHHREALKSSVRNTAASRRR) are disordered. 8 ARM repeats span residues 125–165 (VPLV…NIAA), 167–206 (EPEE…NVAG), 209–248 (AELR…NLIK), 253–292 (KAAN…YLSA), 294–335 (SDRG…NLIA), 338–383 (DYMV…NIAA), 386–425 (FEHK…NLCV), and 438–477 (VEHL…LVMR).

The protein belongs to the importin alpha family. In terms of assembly, forms a complex with importin subunit beta-1. The whole complex, most stable and composed of importin alpha, importin beta and NLS substrate, is referred to as PTAC or pore targeting complex. As to expression, expressed in root, callus, and etiolated leaf. Low expression in green leaf.

Its subcellular location is the cytoplasm. It localises to the perinuclear region. Binds specifically and directly to substrates containing either a simple or bipartite NLS motif. Promotes docking of import substrates to the nuclear envelope. This Oryza sativa subsp. japonica (Rice) protein is Importin subunit alpha-2.